A 69-amino-acid chain; its full sequence is MNSGTVKWFNSTKGFGFIQPDDGATDVFVHASAVERAGMRSLVEGQKVTYDIVRDTKSGKSSADNLRAA.

In terms of domain architecture, CSD spans G4–L66.

The protein resides in the cytoplasm. The chain is Cold shock protein CspA (cspA) from Rhizobium meliloti (strain 1021) (Ensifer meliloti).